Reading from the N-terminus, the 487-residue chain is Ribulose bisphosphate carboxylase large chain (487 aa).

Substrate-binding residues include N127 and T177. K179 acts as the Proton acceptor in catalysis. A substrate-binding site is contributed by K181. Positions 205, 207, and 208 each coordinate Mg(2+). An N6-carboxylysine modification is found at K205. H297 functions as the Proton acceptor in the catalytic mechanism. Substrate is bound by residues R298, H330, and S382.

It belongs to the RuBisCO large chain family. Type I subfamily. Heterohexadecamer of 8 large chains and 8 small chains. Mg(2+) serves as cofactor.

It catalyses the reaction 2 (2R)-3-phosphoglycerate + 2 H(+) = D-ribulose 1,5-bisphosphate + CO2 + H2O. The catalysed reaction is D-ribulose 1,5-bisphosphate + O2 = 2-phosphoglycolate + (2R)-3-phosphoglycerate + 2 H(+). In terms of biological role, ruBisCO catalyzes two reactions: the carboxylation of D-ribulose 1,5-bisphosphate, the primary event in carbon dioxide fixation, as well as the oxidative fragmentation of the pentose substrate. Both reactions occur simultaneously and in competition at the same active site. The chain is Ribulose bisphosphate carboxylase large chain from Paracoccus denitrificans (strain Pd 1222).